The following is a 290-amino-acid chain: Translin-associated protein X (290 aa).

Positions 1 to 34 are disordered; the sequence is MNGKEGPGGFRKRKHDNFPHNQRREGKDASSSSP. Positions 16–28 are enriched in basic and acidic residues; the sequence is DNFPHNQRREGKD. Positions 73-208 are interaction with C1D; it reads LLHRITSAPD…MRMCINSVGN (136 aa). Mg(2+) contacts are provided by Glu129 and Glu197. Lys279 is covalently cross-linked (Glycyl lysine isopeptide (Lys-Gly) (interchain with G-Cter in SUMO2)).

Belongs to the translin family. As to quaternary structure, ring-shaped heterooctamer of six TSN and two TSNAX subunits. Interacts with GOLGA3, TSNAXIP1, SUN1 and AKAP9. Interacts with the homodimeric form of C1D following gamma-radiation. Interacts with TSN and C1D in a mutually exclusive manner. Sumoylated with SUMO1. In terms of tissue distribution, detected in cerebellum.

It localises to the cytoplasm. Its subcellular location is the perinuclear region. The protein localises to the golgi apparatus. The protein resides in the nucleus. Acts in combination with TSN as an endonuclease involved in the activation of the RNA-induced silencing complex (RISC). Possible role in spermatogenesis. In Rattus norvegicus (Rat), this protein is Translin-associated protein X (Tsnax).